Consider the following 194-residue polypeptide: MENTQENPTSQNPTPADETARQAAEAAAPQQEAAANAATDSPVNAEQSALAEAEAKIAELQESFLRAKAETENVRRRAQEDVAKAHKFAIESFAEHLLPVIDSLEAAVAHSSDDLQKVREGVELTLRQLTGALEKGRVVALNPVGEKFDPHRHQAISMVPAEQEPNTVVAVLQKGFVIADRVLRPALVTVAAPK.

Residues 1-14 (MENTQENPTSQNPT) are compositionally biased toward polar residues. The disordered stretch occupies residues 1–50 (MENTQENPTSQNPTPADETARQAAEAAAPQQEAAANAATDSPVNAEQSAL). A compositionally biased stretch (low complexity) spans 21-38 (RQAAEAAAPQQEAAANAA).

This sequence belongs to the GrpE family. As to quaternary structure, homodimer.

It is found in the cytoplasm. Participates actively in the response to hyperosmotic and heat shock by preventing the aggregation of stress-denatured proteins, in association with DnaK and GrpE. It is the nucleotide exchange factor for DnaK and may function as a thermosensor. Unfolded proteins bind initially to DnaJ; upon interaction with the DnaJ-bound protein, DnaK hydrolyzes its bound ATP, resulting in the formation of a stable complex. GrpE releases ADP from DnaK; ATP binding to DnaK triggers the release of the substrate protein, thus completing the reaction cycle. Several rounds of ATP-dependent interactions between DnaJ, DnaK and GrpE are required for fully efficient folding. The protein is Protein GrpE of Paraburkholderia phytofirmans (strain DSM 17436 / LMG 22146 / PsJN) (Burkholderia phytofirmans).